Consider the following 114-residue polypeptide: Thioredoxin H1 (114 aa).

At A2 the chain carries N-acetylalanine. The Thioredoxin domain occupies 2 to 114 (ASEEGQVIAC…LQSTIAKHLA (113 aa)). Catalysis depends on nucleophile residues C40 and C43. Residues C40 and C43 are joined by a disulfide bond.

The protein belongs to the thioredoxin family. Plant H-type subfamily. In terms of assembly, interacts with FBA6. Interacts with MDH1.

The protein localises to the cytoplasm. Its function is as follows. Thiol-disulfide oxidoreductase involved in the redox regulation of a number of cytosolic enzymes. Activates the cytosolic malate dehydrogenase (MDH) probably by reducing an interchain disulfide bond of the inactive MDH homodimer. Possesses insulin disulfide bonds reducing activity. This is Thioredoxin H1 (TRX1) from Arabidopsis thaliana (Mouse-ear cress).